Consider the following 457-residue polypeptide: MEKPWSGRFKEETDKFVEDFTESVSFDKELAFEDIEQDIAHVKTLQKAGILTEEEARELIQELLKIKEEIKEGKFQWKKELEDVHMNIEAELINRLGDVGRKLHTARSRNDQVATDEKLYLKKEIKEVLQLLKELRKTLVELAETTVDFVMPSYTHLQRAQPIRVAHYFLAYREILLKDSERLMDTYRRVDELPLGSGAVAGVDFPLDRFYTAELLGFNRVTRNSMYATAERDFIIEFLSNCALIAQHLSRLAEDLIIWNTEEFNFVELPDKLCTGSSIMPQKKNPDVLELIRGKTGRIYGNLIALLTTMKALPMAYNRDMQEDKEPLFDTLKNLKNMIKGMTLVLSDLRVKEQNMRKASGNFLLITDIANYLVEKGVPFRTAHHIAGSIVAYLLEKGKKLEEMTLEEFKQFSEKFEEDVFDILSPERAADRKRVYGGTAKEEILRIIEVAKAEEGL.

It belongs to the lyase 1 family. Argininosuccinate lyase subfamily.

The protein localises to the cytoplasm. The catalysed reaction is 2-(N(omega)-L-arginino)succinate = fumarate + L-arginine. It functions in the pathway amino-acid biosynthesis; L-arginine biosynthesis; L-arginine from L-ornithine and carbamoyl phosphate: step 3/3. The sequence is that of Argininosuccinate lyase from Aquifex aeolicus (strain VF5).